The primary structure comprises 403 residues: Chorismate synthase (403 aa).

NADP(+) contacts are provided by arginine 40 and arginine 46. FMN is bound by residues 140–142 (RSS), 261–262 (QA), glycine 305, 320–324 (KPIST), and arginine 346.

Belongs to the chorismate synthase family. In terms of assembly, homotetramer. The cofactor is FMNH2.

The enzyme catalyses 5-O-(1-carboxyvinyl)-3-phosphoshikimate = chorismate + phosphate. It participates in metabolic intermediate biosynthesis; chorismate biosynthesis; chorismate from D-erythrose 4-phosphate and phosphoenolpyruvate: step 7/7. In terms of biological role, catalyzes the anti-1,4-elimination of the C-3 phosphate and the C-6 proR hydrogen from 5-enolpyruvylshikimate-3-phosphate (EPSP) to yield chorismate, which is the branch point compound that serves as the starting substrate for the three terminal pathways of aromatic amino acid biosynthesis. This reaction introduces a second double bond into the aromatic ring system. This Corynebacterium diphtheriae (strain ATCC 700971 / NCTC 13129 / Biotype gravis) protein is Chorismate synthase.